Consider the following 1002-residue polypeptide: Protein SMAX1-LIKE 7 (1002 aa).

The 178-residue stretch at 8 to 185 folds into the Clp R domain; it reads ARQCLTEETA…DVLHPPVTSQ (178 aa). Repeat regions lie at residues 12–86 and 103–185; these read LTEE…LDRL and VSNS…VTSQ. The short motif at 854 to 858 is the EAR element; that stretch reads LDLNL.

Belongs to the ClpA/ClpB family. Interacts with TPL/TPR in an EAR-motif dependent manner. Interacts with TPL, TPR1, TPR2 and TPR4. Interacts with MAX2 and TPR2. Interacts with D14. The interaction with D14 occurs in the presence of (2'R) stereoisomers of strigolactones, but not (2'S) stereoisomers. Post-translationally, ubiquitinated upon strigolactone treatment. Strigolactone, but not karrikin, triggers rapid SCF(MAX2)-dependent degradation. Expressed in axillary branches and roots. Detected in seedlings and leaves. Expressed in the primary rosette buds and expanding leaves of adult rosettes, the vasculature of the hypocotyls, cotyledons, and mature roots, and in the midvein and petioles of young leaves.

It is found in the nucleus. Probable component of a transcriptional corepressor complex involved in branching control. Regulates cotyledon expansion and lateral root growth, but not germination or hypocotyl elongation. Promotes auxin transport and PIN1 accumulation in the stem and represses BRC1/TCP18 expression in axillary buds. The sequence is that of Protein SMAX1-LIKE 7 from Arabidopsis thaliana (Mouse-ear cress).